Reading from the N-terminus, the 571-residue chain is Oxysterol-binding protein 11 (571 aa).

The segment at 1-73 (MSNFFKKLVK…IGEQIDTLDD (73 aa)) is disordered. Residues 33–42 (NGNQVVPDTA) are compositionally biased toward polar residues. The segment covering 43 to 54 (SSYSDDSNSLSD) has biased composition (low complexity). The stretch at 387 to 420 (YLEREENKLANKEKNKIEEREREKRKTRESRKEI) forms a coiled coil.

This sequence belongs to the OSBP family.

The polypeptide is Oxysterol-binding protein 11 (osbK) (Dictyostelium discoideum (Social amoeba)).